The chain runs to 149 residues: Large ribosomal subunit protein uL15 (149 aa).

Over residues 1-11 (MSDPIKLHDLR) the composition is skewed to basic and acidic residues. Positions 1–44 (MSDPIKLHDLRPAPGAKKAKTRVGRGEASKGKTAGRGTKGTKAR) are disordered.

This sequence belongs to the universal ribosomal protein uL15 family. In terms of assembly, part of the 50S ribosomal subunit.

Binds to the 23S rRNA. This chain is Large ribosomal subunit protein uL15, found in Corynebacterium jeikeium (strain K411).